The following is a 288-amino-acid chain: MLVNFKLMLQKAKLGKYAIPHININNYEWAKAVLTAANQANSPIIVSVSEGALKYMSGYSVVIPLVKGLIESLSVKVPVTLHLDHGSYDACIQALQAGFSSVMFDGSHLPFEENFNKSKKLIEIAQKTNASVELEVGTIGGEEDGVIGQGELANVDECKQIASLKPDALAAGIGNIHGIYPKNWKGLNFPLIETISKITNLPLVLHGGSGILENDVKKAISLGICKLNINTECQLAFAHEIRKYIESNKDLDLNKKGYDPRKLLKEPTQAIVDTCLEKIDLCGSRNKA.

Serine 49 serves as a coordination point for D-glyceraldehyde 3-phosphate. Aspartate 84 (proton donor) is an active-site residue. Residues histidine 85, aspartate 105, glutamate 135, and histidine 177 each contribute to the Zn(2+) site. Glycine 178 contacts dihydroxyacetone phosphate. Histidine 206 contributes to the Zn(2+) binding site. Dihydroxyacetone phosphate contacts are provided by residues 207–209 (GGS) and 228–231 (NINT).

It belongs to the class II fructose-bisphosphate aldolase family. Homodimer. Zn(2+) is required as a cofactor.

The catalysed reaction is beta-D-fructose 1,6-bisphosphate = D-glyceraldehyde 3-phosphate + dihydroxyacetone phosphate. It participates in carbohydrate degradation; glycolysis; D-glyceraldehyde 3-phosphate and glycerone phosphate from D-glucose: step 4/4. In terms of biological role, catalyzes the aldol condensation of dihydroxyacetone phosphate (DHAP or glycerone-phosphate) with glyceraldehyde 3-phosphate (G3P) to form fructose 1,6-bisphosphate (FBP) in gluconeogenesis and the reverse reaction in glycolysis. The chain is Fructose-bisphosphate aldolase (fba) from Mycoplasma genitalium (strain ATCC 33530 / DSM 19775 / NCTC 10195 / G37) (Mycoplasmoides genitalium).